The primary structure comprises 751 residues: Transposable element P transposase (751 aa).

The THAP-type zinc-finger motif lies at 1-77 (MKYCKFCCKA…LNADAVPSKV (77 aa)).

Functionally, P-element transposase that specifically mediates transposition of P-elements. Mediates both; precise and imprecise excision. In Drosophila melanogaster (Fruit fly), this protein is Transposable element P transposase.